The following is a 186-amino-acid chain: UPF0340 protein M6_Spy1622 (186 aa).

It belongs to the UPF0340 family.

The polypeptide is UPF0340 protein M6_Spy1622 (Streptococcus pyogenes serotype M6 (strain ATCC BAA-946 / MGAS10394)).